A 372-amino-acid chain; its full sequence is 3-ketodihydrosphingosine reductase TSC10 (372 aa).

Valine 64 serves as a coordination point for NADP(+). NADPH contacts are provided by glycine 67, serine 69, glycine 71, arginine 92, lysine 96, aspartate 123, and leucine 124. Positions 67-71 (GGSQG) match the GXSXG motif. Aspartate 123 serves as a coordination point for NADP(+). The Proton donor role is filled by serine 205. Tyrosine 219, lysine 223, and serine 254 together coordinate NADP(+). Residue tyrosine 219 is the Proton acceptor of the active site. The active-site Lowers pKa of active site Tyr is lysine 223. The chain crosses the membrane as a helical span at residues 321 to 341 (LLQIPLAIFMCIFSPVWNAFV).

The protein belongs to the short-chain dehydrogenases/reductases (SDR) family.

The protein resides in the endoplasmic reticulum membrane. It catalyses the reaction sphinganine + NADP(+) = 3-oxosphinganine + NADPH + H(+). It functions in the pathway lipid metabolism; sphingolipid metabolism. Functionally, catalyzes the reduction of 3'-oxosphinganine (3-ketodihydrosphingosine/KDS) to sphinganine (dihydrosphingosine/DHS), the second step of de novo sphingolipid biosynthesis. This Yarrowia lipolytica (strain CLIB 122 / E 150) (Yeast) protein is 3-ketodihydrosphingosine reductase TSC10 (TSC10).